The primary structure comprises 352 residues: Zona pellucida-binding protein 2 (352 aa).

The signal sequence occupies residues 1–28 (MAGGGGRPCSPQRALLGMVAIMAVVAEA). N-linked (GlcNAc...) asparagine glycosylation is found at N110 and N309.

Belongs to the zona pellucida-binding protein Sp38 family.

Its subcellular location is the secreted. The protein resides in the cytoplasmic vesicle. It is found in the secretory vesicle. The protein localises to the acrosome. May be implicated in the gamete interaction during fertilization. This chain is Zona pellucida-binding protein 2 (ZPBP2), found in Gallus gallus (Chicken).